The following is a 49-amino-acid chain: uncharacterized protein (49 aa).

Residues 22–42 traverse the membrane as a helical segment; that stretch reads AIVGISIMIIIAIGIYLIIEY.

Its subcellular location is the membrane. This is an uncharacterized protein from Methanocaldococcus jannaschii (strain ATCC 43067 / DSM 2661 / JAL-1 / JCM 10045 / NBRC 100440) (Methanococcus jannaschii).